A 454-amino-acid polypeptide reads, in one-letter code: Guanine deaminase (454 aa).

Zn(2+)-binding residues include H82 and H84. Substrate is bound by residues 84-87 (HAPQ), 213-214 (RF), 240-243 (HISE), and D330. 2 residues coordinate Zn(2+): H240 and D330. A Phosphoserine modification is found at S453.

It belongs to the metallo-dependent hydrolases superfamily. ATZ/TRZ family. As to quaternary structure, homodimer. The cofactor is Zn(2+).

It carries out the reaction guanine + H2O + H(+) = xanthine + NH4(+). Its pathway is purine metabolism; guanine degradation; xanthine from guanine: step 1/1. Its function is as follows. Catalyzes the hydrolytic deamination of guanine, producing xanthine and ammonia. This chain is Guanine deaminase, found in Mus musculus (Mouse).